Consider the following 171-residue polypeptide: CDP-archaeol synthase (171 aa).

The next 5 helical transmembrane spans lie at 7 to 27, 54 to 74, 84 to 104, 115 to 135, and 141 to 161; these read IFWA…PVLV, GFIG…FITP, VKLA…GSFI, PAIG…AYPV, and GQII…NYFA.

The protein belongs to the CDP-archaeol synthase family. Mg(2+) is required as a cofactor.

It localises to the cell membrane. The catalysed reaction is 2,3-bis-O-(geranylgeranyl)-sn-glycerol 1-phosphate + CTP + H(+) = CDP-2,3-bis-O-(geranylgeranyl)-sn-glycerol + diphosphate. It functions in the pathway membrane lipid metabolism; glycerophospholipid metabolism. Catalyzes the formation of CDP-2,3-bis-(O-geranylgeranyl)-sn-glycerol (CDP-archaeol) from 2,3-bis-(O-geranylgeranyl)-sn-glycerol 1-phosphate (DGGGP) and CTP. This reaction is the third ether-bond-formation step in the biosynthesis of archaeal membrane lipids. In Thermococcus kodakarensis (strain ATCC BAA-918 / JCM 12380 / KOD1) (Pyrococcus kodakaraensis (strain KOD1)), this protein is CDP-archaeol synthase.